The sequence spans 515 residues: UPF0053 protein BUsg_314 (515 aa).

Helical transmembrane passes span 14–34, 49–69, 79–99, 125–145, 150–170, 185–205, and 207–227; these read LTLV…VAIL, IGLG…SWVV, NFFS…FLLF, FWAV…DAII, MVNQ…LMLL, VVVL…AEAL, and FYIP…IEIF. CBS domains follow at residues 309 to 368 and 372 to 432; these read MTPR…NIDV and ASQI…DADE.

Belongs to the UPF0053 family.

The protein resides in the cell membrane. The sequence is that of UPF0053 protein BUsg_314 from Buchnera aphidicola subsp. Schizaphis graminum (strain Sg).